The following is a 250-amino-acid chain: Cell division protein ZapD (250 aa).

This sequence belongs to the ZapD family. Interacts with FtsZ.

The protein localises to the cytoplasm. In terms of biological role, cell division factor that enhances FtsZ-ring assembly. Directly interacts with FtsZ and promotes bundling of FtsZ protofilaments, with a reduction in FtsZ GTPase activity. This chain is Cell division protein ZapD, found in Yersinia pestis bv. Antiqua (strain Antiqua).